The sequence spans 428 residues: Adenylosuccinate synthetase (428 aa).

Residues 12–18 and 40–42 contribute to the GTP site; these read GDEGKGK and GHT. D13 (proton acceptor) is an active-site residue. Mg(2+) is bound by residues D13 and G40. Residues 13-16, 38-41, T130, R144, Q225, T240, and R304 each bind IMP; these read DEGK and NAGH. Catalysis depends on H41, which acts as the Proton donor. 300–306 is a substrate binding site; it reads VTTGRAR. GTP contacts are provided by residues R306, 332 to 334, and 414 to 416; these read KID and SVG.

The protein belongs to the adenylosuccinate synthetase family. In terms of assembly, homodimer. Requires Mg(2+) as cofactor.

The protein resides in the cytoplasm. The enzyme catalyses IMP + L-aspartate + GTP = N(6)-(1,2-dicarboxyethyl)-AMP + GDP + phosphate + 2 H(+). The protein operates within purine metabolism; AMP biosynthesis via de novo pathway; AMP from IMP: step 1/2. Functionally, plays an important role in the de novo pathway of purine nucleotide biosynthesis. Catalyzes the first committed step in the biosynthesis of AMP from IMP. The chain is Adenylosuccinate synthetase from Clostridium acetobutylicum (strain ATCC 824 / DSM 792 / JCM 1419 / IAM 19013 / LMG 5710 / NBRC 13948 / NRRL B-527 / VKM B-1787 / 2291 / W).